A 441-amino-acid chain; its full sequence is Ubiquitin carboxyl-terminal hydrolase MINDY-3 (441 aa).

Cys51 acts as the Nucleophile in catalysis. His284 (proton acceptor) is an active-site residue.

This sequence belongs to the MINDY deubiquitinase family. FAM188 subfamily.

Its subcellular location is the nucleus. It carries out the reaction Thiol-dependent hydrolysis of ester, thioester, amide, peptide and isopeptide bonds formed by the C-terminal Gly of ubiquitin (a 76-residue protein attached to proteins as an intracellular targeting signal).. In terms of biological role, hydrolase that can remove 'Lys-48'-linked conjugated ubiquitin from proteins. This chain is Ubiquitin carboxyl-terminal hydrolase MINDY-3 (mindy3), found in Xenopus tropicalis (Western clawed frog).